A 421-amino-acid chain; its full sequence is MANFDILEDLKWRGAINQETDEEGLRDYLAKHDDLALYCGTDPTGDSLHIGHLIPFMILKRFQLAGYKPVIVIGGGTGSIGDPSGRSTERVLQSEETIKHNEEALTAQMVKLFGTENFRIVNNRDWLGKMNLLEFLRDYGKLFQVNNMLNKEVVASRLKNGISFTEFSYQILQAIDFYILNRDHGVQMQIGGADQWGNITAGIDLIHRLEGADRPAFGLTIPLMLKADGTKFGKSAGGAVWLDPEKTSPYEFYQFWINQDDRDVIKYLKYFTFLKHEEIDALEEKVKTEPWKREAQKRLAEEVTKFVHGEEGLKEAQTVTEALFSGNVKDLTTKQVEIALAKAPSAESGEEKKNLVDFLVDTKIESSKRQAREDVNNGAIYVNGDRIQDTDFEVDPAAAFDGKFVIIRKGKKKYTLVHIKG.

Tyr38 contacts L-tyrosine. The short motif at 43-52 (PTGDSLHIGH) is the 'HIGH' region element. 2 residues coordinate L-tyrosine: Tyr169 and Gln173. Positions 231 to 235 (KFGKS) match the 'KMSKS' region motif. Position 234 (Lys234) interacts with ATP. The region spanning 353-419 (KNLVDFLVDT…GKKKYTLVHI (67 aa)) is the S4 RNA-binding domain.

It belongs to the class-I aminoacyl-tRNA synthetase family. TyrS type 1 subfamily. In terms of assembly, homodimer.

The protein localises to the cytoplasm. The catalysed reaction is tRNA(Tyr) + L-tyrosine + ATP = L-tyrosyl-tRNA(Tyr) + AMP + diphosphate + H(+). Catalyzes the attachment of tyrosine to tRNA(Tyr) in a two-step reaction: tyrosine is first activated by ATP to form Tyr-AMP and then transferred to the acceptor end of tRNA(Tyr). The sequence is that of Tyrosine--tRNA ligase from Lactobacillus delbrueckii subsp. bulgaricus (strain ATCC BAA-365 / Lb-18).